The primary structure comprises 399 residues: MKILVLNCGSSSIKYKLFDMTTKEVIAQGGIEKIGLKGSFLKLTLPNGEKKVLEKDIPEHTIGVEFILNTLISPEYGAIKSLDEINAVGHRMVHGGERFSESVLLNKEVLEAFAACNDLAPLHNPANLKGVNAVSAILPNIPQVGVFDTAFHQTMPDYAYMYAIPYEMYEKYGVRRYGFHGTSHRYVSKRVCEFLGVNPVGQKIITCHIGNGGSIAAIKDGKCIDTTMGLTPLEGLMMGTRSGDIDAGAVTFIMEKEGLNTTGISNLLNKKSGVLGISGVSSDMRELLAACANGNERAILAEKMYYYRIKKYIGAYAAALGGVDIILFTGGVGENQFECRESVCKDMEFMGIKLDNNVNAKVRGEEAIISTADSKVKVVVIPTDEELLIASDTMDILKK.

N7 is a Mg(2+) binding site. Residue K14 coordinates ATP. R91 is a substrate binding site. The Proton donor/acceptor role is filled by D148. Residues 208-212 (HIGNG), 283-285 (DMR), and 331-335 (GVGEN) each bind ATP. Mg(2+) is bound at residue E385.

The protein belongs to the acetokinase family. Homodimer. Mg(2+) serves as cofactor. The cofactor is Mn(2+).

It is found in the cytoplasm. It catalyses the reaction acetate + ATP = acetyl phosphate + ADP. It participates in metabolic intermediate biosynthesis; acetyl-CoA biosynthesis; acetyl-CoA from acetate: step 1/2. In terms of biological role, catalyzes the formation of acetyl phosphate from acetate and ATP. Can also catalyze the reverse reaction. The chain is Acetate kinase from Bacteroides thetaiotaomicron (strain ATCC 29148 / DSM 2079 / JCM 5827 / CCUG 10774 / NCTC 10582 / VPI-5482 / E50).